A 40-amino-acid polypeptide reads, in one-letter code: Photosystem I reaction center subunit IX (40 aa).

The chain crosses the membrane as a helical span at residues 12-34 (APVLLTAWMSLTAGMIIEIQRFF).

Belongs to the PsaJ family.

It localises to the plastid. The protein resides in the chloroplast thylakoid membrane. Functionally, may help in the organization of the PsaE and PsaF subunits. The sequence is that of Photosystem I reaction center subunit IX from Emiliania huxleyi (Coccolithophore).